The chain runs to 373 residues: Cell surface Cu-only superoxide dismutase ARB_03674 (373 aa).

The N-terminal stretch at 1–55 (MIWKQPPRRMGEMGGSLSRRFGNAAASWAVWRVSRSCFSLLFFFYFFLFFSSSSL) is a signal peptide. 2 N-linked (GlcNAc...) asparagine glycosylation sites follow: N75 and N141. Positions 194, 196, and 212 each coordinate Cu cation. C206 and C289 are disulfide-bonded. Residues N254 and N274 are each glycosylated (N-linked (GlcNAc...) asparagine). Residue H280 coordinates Cu cation. N-linked (GlcNAc...) asparagine glycans are attached at residues N283 and N291. Residues 329–348 (GHAPTISATYTPTPTPSPPA) form a disordered region. A compositionally biased stretch (low complexity) spans 331-340 (APTISATYTP). A lipid anchor (GPI-anchor amidated glycine) is attached at G352. Positions 353 to 373 (AGRLVGFSLGAIMAALVPLAL) are cleaved as a propeptide — removed in mature form.

This sequence belongs to the Cu-Zn superoxide dismutase family. As to quaternary structure, monomer. Cu cation serves as cofactor. In terms of processing, the GPI-anchor is attached to the protein in the endoplasmic reticulum and serves to target the protein to the cell surface. There, the glucosamine-inositol phospholipid moiety is cleaved off and the GPI-modified mannoprotein is covalently attached via its lipidless GPI glycan remnant to the 1,6-beta-glucan of the outer cell wall layer.

It is found in the secreted. The protein resides in the cell wall. It localises to the cell membrane. The catalysed reaction is 2 superoxide + 2 H(+) = H2O2 + O2. In terms of biological role, superoxide dismutases serve to convert damaging superoxide radicals, a key form of ROS, to less damaging hydrogen peroxide that can be converted into water by catalase action. Degrades host-derived reactive oxygen species to escape innate immune surveillance. Involved in the occurrence of miconazole-tolerant persisters in biofilms. Persisters are cells that survive high doses of an antimicrobial agent. The unusual attributes of SOD5-like fungal proteins, including the absence of zinc and an open active site that readily captures extracellular copper, make these SODs well suited to meet challenges in zinc and copper availability at the host-pathogen interface. This chain is Cell surface Cu-only superoxide dismutase ARB_03674, found in Arthroderma benhamiae (strain ATCC MYA-4681 / CBS 112371) (Trichophyton mentagrophytes).